Consider the following 320-residue polypeptide: 1-aminocyclopropane-1-carboxylate oxidase 3 (320 aa).

Residues 153-253 (PNFGTKVSNY…RMSLASFYNP (101 aa)) form the Fe2OG dioxygenase domain. Fe cation is bound by residues histidine 177, aspartate 179, and histidine 234.

Belongs to the iron/ascorbate-dependent oxidoreductase family. The cofactor is Fe cation.

It catalyses the reaction 1-aminocyclopropane-1-carboxylate + L-ascorbate + O2 = ethene + L-dehydroascorbate + hydrogen cyanide + CO2 + 2 H2O. It participates in alkene biosynthesis; ethylene biosynthesis via S-adenosyl-L-methionine; ethylene from S-adenosyl-L-methionine: step 2/2. The polypeptide is 1-aminocyclopropane-1-carboxylate oxidase 3 (ACO3) (Petunia hybrida (Petunia)).